The following is a 435-amino-acid chain: Histone acetyltransferase type B subunit 2 (435 aa).

WD repeat units follow at residues 135–175, 188–228, 238–278, 284–324, and 328–368; these read NHAG…SKAP, GQTK…KQDP, GHSA…TAKA, GHNA…TKHH, and AHTN…AEQT. Residues 370–374 form an interaction with the histone H4 N-terminus region; the sequence is DDAED. Residues 385–425 form a WD 6 repeat; that stretch reads GHTSKVCDISWSPSSPWTIASASEDNILQVWEPSRHLRTPY.

The protein belongs to the WD repeat RBAP46/RBAP48/MSI1 family. In terms of assembly, component of the HAT-B complex composed of at least HAT1 and HAT2. The HAT-B complex binds to histone H4 tail.

The protein localises to the cytoplasm. It is found in the nucleus. Its function is as follows. Regulatory subunit of the histone acetylase B (HAT-B) complex. The complex acetylates 'Lys-12' of histone H4 which is required for telomeric silencing. The chain is Histone acetyltransferase type B subunit 2 (HAT2) from Cryptococcus neoformans var. neoformans serotype D (strain B-3501A) (Filobasidiella neoformans).